Consider the following 468-residue polypeptide: MDKFNPKKEKTVKKRALKVLTEISPTPLFSMLFLLHISQIATYLSLSDKETLNITVKTKQGGTDTCAGRYVYMHNLPSRFNEDLIKSCEAYIELRNKCKYLINSGFGPRILEEDHNHTTRVLTIETGSWYYTNQFMLEVIFREKMRHYECLTNDSSLSSVVFVPFYAGFDVRRFWGYNVKLRDELGEDLAQWLRERPEWRKMYGRDHFFVTGRVGRDFRRVTDQDSDWGNKLMRLPEFENITMLSIETNSRSNEFAVPYPTYFHPKSRTEVKRWQRQVTMMQRRYLFSFVGANRPKMEESIRGEIIRQCLASQGRCKFLDCDTSSKDCSDPVKVVEVFQDSVFCLQPPGDTPTRRSTFDSILAGCIPVFFSVDSVYNQYKWYFPKDRTKYSVYIAEEGVKKGKVSIEKLLANVSEEKISRMRNEVEKIIPKIIYTKPGEVGPEKIEDAFEIAVARVLERVSLFKMTRI.

The Cytoplasmic segment spans residues 1-18 (MDKFNPKKEKTVKKRALK). Residues 19 to 35 (VLTEISPTPLFSMLFLL) form a helical; Signal-anchor for type II membrane protein membrane-spanning segment. Residues 36 to 468 (HISQIATYLS…RVSLFKMTRI (433 aa)) are Lumenal-facing. Residues N53, N116, N153, N240, and N412 are each glycosylated (N-linked (GlcNAc...) asparagine).

Belongs to the glycosyltransferase 47 family. As to expression, expressed in roots, hypocotyls, cotyledons, leaves, stems, petals and carpels.

Its subcellular location is the golgi apparatus membrane. Its function is as follows. Functions in xyloglucan synthesis by adding side chains to the xylosylated glucan backbone. Involved in the galactosylation of hemicellulose xyloglucan. In Arabidopsis thaliana (Mouse-ear cress), this protein is Probable xyloglucan galactosyltransferase GT13.